The primary structure comprises 186 residues: Ribosome-recycling factor (186 aa).

Belongs to the RRF family.

Its subcellular location is the cytoplasm. In terms of biological role, responsible for the release of ribosomes from messenger RNA at the termination of protein biosynthesis. May increase the efficiency of translation by recycling ribosomes from one round of translation to another. The chain is Ribosome-recycling factor from Coprothermobacter proteolyticus (strain ATCC 35245 / DSM 5265 / OCM 4 / BT).